Here is a 216-residue protein sequence, read N- to C-terminus: Splicing factor U2AF 23 kDa subunit (216 aa).

The C3H1-type 1 zinc-finger motif lies at Glu-12 to Pro-40. Positions Gln-44–Val-141 constitute an RRM domain. The C3H1-type 2 zinc-finger motif lies at Asp-143–Lys-170. The interval Glu-194–Asn-216 is disordered.

In terms of assembly, forms a heterodimer with the U2AF large subunit. Can also form a homodimer. U2AF large subunit (U2AF59), U2AF small subunit (U2AF23) and SF1 (bpb1) interact to form a complex required for complex A formation. Interacts with cwf13.

The protein resides in the nucleus. Functionally, necessary for the splicing of pre-mRNA. The SF1-U2AF59-U2AF23 complex has a role in the recognition of the branch site (5'-UACUAAC-3'), the pyrimidine tract and the 3'-splice site at the 3'-end of introns. The polypeptide is Splicing factor U2AF 23 kDa subunit (Schizosaccharomyces pombe (strain 972 / ATCC 24843) (Fission yeast)).